Reading from the N-terminus, the 258-residue chain is Chymotrypsin-like elastase family member 1 (258 aa).

The signal sequence occupies residues 1–8 (MLVLYGHS). A propeptide spans 9–18 (TQDLPETNAR) (activation peptide). Residues 19–256 (VVGGTEAGRN…YISWINNVIA (238 aa)) enclose the Peptidase S1 domain. A disulfide bond links cysteine 48 and cysteine 64. The Charge relay system role is filled by histidine 63. Ca(2+)-binding residues include aspartate 77, asparagine 79, glutamine 82, and glutamate 87. A glycan (N-linked (GlcNAc...) asparagine) is linked at asparagine 79. Aspartate 111 acts as the Charge relay system in catalysis. 3 cysteine pairs are disulfide-bonded: cysteine 145-cysteine 212, cysteine 176-cysteine 192, and cysteine 202-cysteine 232. Residue serine 206 is the Charge relay system of the active site. N-linked (GlcNAc...) asparagine glycosylation occurs at asparagine 233.

It belongs to the peptidase S1 family. Elastase subfamily. The cofactor is Ca(2+). In terms of tissue distribution, basal layers of epidermis (at protein level). Not expressed in the pancreas.

It is found in the secreted. It carries out the reaction Hydrolysis of proteins, including elastin. Preferential cleavage: Ala-|-Xaa.. Serine proteases that hydrolyze many proteins in addition to elastin. This chain is Chymotrypsin-like elastase family member 1 (CELA1), found in Homo sapiens (Human).